We begin with the raw amino-acid sequence, 358 residues long: Probable branched-chain-amino-acid aminotransferase (358 aa).

At K196 the chain carries N6-(pyridoxal phosphate)lysine.

It belongs to the class-IV pyridoxal-phosphate-dependent aminotransferase family. Pyridoxal 5'-phosphate is required as a cofactor.

The enzyme catalyses L-leucine + 2-oxoglutarate = 4-methyl-2-oxopentanoate + L-glutamate. It carries out the reaction L-isoleucine + 2-oxoglutarate = (S)-3-methyl-2-oxopentanoate + L-glutamate. The catalysed reaction is L-valine + 2-oxoglutarate = 3-methyl-2-oxobutanoate + L-glutamate. The protein operates within amino-acid biosynthesis; L-isoleucine biosynthesis; L-isoleucine from 2-oxobutanoate: step 4/4. It functions in the pathway amino-acid biosynthesis; L-leucine biosynthesis; L-leucine from 3-methyl-2-oxobutanoate: step 4/4. Its pathway is amino-acid biosynthesis; L-valine biosynthesis; L-valine from pyruvate: step 4/4. Acts on leucine, isoleucine and valine. This Staphylococcus epidermidis (strain ATCC 12228 / FDA PCI 1200) protein is Probable branched-chain-amino-acid aminotransferase (ilvE).